The primary structure comprises 218 residues: MARITNMGKRKRFLEATPYESKVLEQPKNSSNTNEESSSQDNMKASFGSSKRYDERQKKKRSEYRRLRRINQRNRDKFCFACRQQGHIVQDCPEAKDNVSICFRCGSKEHSLNACSKKGPLKFAKCFICHENGHLSGQCEQNPKGLYPKGGCCKFCSSVHHLAKDCDQVNKDDVSFGHVVGVAGTTGADEDVYHEYAKTVAAPTKKRPVKPVKKLVTF.

The segment at M1 to L67 is disordered. Low complexity predominate over residues N29–S39. The segment covering Q40 to S49 has biased composition (polar residues). Residues K58–L67 show a composition bias toward basic residues. CCHC-type zinc fingers lie at residues K77–E94, S100–K117, and A124–Q141. Residues C152–Q168 form a CCHC-type 4; atypical zinc finger.

This is an uncharacterized protein from Schizosaccharomyces pombe (strain 972 / ATCC 24843) (Fission yeast).